A 758-amino-acid chain; its full sequence is 5-methyltetrahydropteroyltriglutamate--homocysteine methyltransferase (758 aa).

Residues 17 to 20 (RELK) and Lys117 contribute to the 5-methyltetrahydropteroyltri-L-glutamate site. L-homocysteine contacts are provided by residues 434-436 (IGS) and Glu487. Residues 434 to 436 (IGS) and Glu487 contribute to the L-methionine site. 5-methyltetrahydropteroyltri-L-glutamate-binding positions include 518–519 (RC) and Trp564. Asp602 lines the L-homocysteine pocket. An L-methionine-binding site is contributed by Asp602. 5-methyltetrahydropteroyltri-L-glutamate is bound at residue Glu608. Positions 644, 646, and 668 each coordinate Zn(2+). Residue His697 is the Proton donor of the active site. Cys729 provides a ligand contact to Zn(2+).

It belongs to the vitamin-B12 independent methionine synthase family. Zn(2+) serves as cofactor.

The catalysed reaction is 5-methyltetrahydropteroyltri-L-glutamate + L-homocysteine = tetrahydropteroyltri-L-glutamate + L-methionine. It functions in the pathway amino-acid biosynthesis; L-methionine biosynthesis via de novo pathway; L-methionine from L-homocysteine (MetE route): step 1/1. Functionally, catalyzes the transfer of a methyl group from 5-methyltetrahydrofolate to homocysteine resulting in methionine formation. This is 5-methyltetrahydropteroyltriglutamate--homocysteine methyltransferase from Yersinia pseudotuberculosis serotype O:1b (strain IP 31758).